The following is a 70-amino-acid chain: MKVKEIREMSTEEIKAKVAELKEELFNLRFQLAVNNLENTARIREVRRAIAQCKTVIRERELKAQGEVKA.

The protein belongs to the universal ribosomal protein uL29 family.

The polypeptide is Large ribosomal subunit protein uL29 (Symbiobacterium thermophilum (strain DSM 24528 / JCM 14929 / IAM 14863 / T)).